The sequence spans 236 residues: 2,3,4,5-tetrahydropyridine-2,6-dicarboxylate N-acetyltransferase (236 aa).

This sequence belongs to the transferase hexapeptide repeat family. DapH subfamily.

It catalyses the reaction (S)-2,3,4,5-tetrahydrodipicolinate + acetyl-CoA + H2O = L-2-acetamido-6-oxoheptanedioate + CoA. It functions in the pathway amino-acid biosynthesis; L-lysine biosynthesis via DAP pathway; LL-2,6-diaminopimelate from (S)-tetrahydrodipicolinate (acetylase route): step 1/3. Functionally, catalyzes the transfer of an acetyl group from acetyl-CoA to tetrahydrodipicolinate. The chain is 2,3,4,5-tetrahydropyridine-2,6-dicarboxylate N-acetyltransferase from Bacillus subtilis (strain 168).